The sequence spans 298 residues: Mitochondrial 2-oxodicarboxylate carrier (298 aa).

Solcar repeat units lie at residues histidine 10–phenylalanine 99, serine 106–asparagine 195, and leucine 204–tryptophan 293. Transmembrane regions (helical) follow at residues valine 16–valine 36, phenylalanine 69–valine 88, proline 112–valine 132, glycine 166–phenylalanine 186, leucine 204–asparagine 224, and leucine 276–glutamate 296.

Belongs to the mitochondrial carrier (TC 2.A.29) family. As to expression, widely expressed.

It is found in the mitochondrion inner membrane. It carries out the reaction 2-oxoadipate(in) + 2-oxoglutarate(out) = 2-oxoadipate(out) + 2-oxoglutarate(in). The catalysed reaction is hexanedioate(in) + 2-oxoglutarate(out) = hexanedioate(out) + 2-oxoglutarate(in). The enzyme catalyses L-2-aminoadipate(in) + 2-oxoglutarate(out) = L-2-aminoadipate(out) + 2-oxoglutarate(in). It catalyses the reaction glutarate(in) + 2-oxoglutarate(out) = glutarate(out) + 2-oxoglutarate(in). It carries out the reaction 2-oxoheptanedioate(in) + 2-oxoglutarate(out) = 2-oxoheptanedioate(out) + 2-oxoglutarate(in). The catalysed reaction is heptanedioate(in) + 2-oxoglutarate(out) = heptanedioate(out) + 2-oxoglutarate(in). The enzyme catalyses citrate(in) + 2-oxoglutarate(out) = citrate(out) + 2-oxoglutarate(in). Transports dicarboxylates across the inner membranes of mitochondria by a counter-exchange mechanism. Can transport 2-oxoadipate (2-oxohexanedioate), 2-oxoglutarate, adipate (hexanedioate), glutarate, and to a lesser extent, pimelate (heptanedioate), 2-oxopimelate (2-oxoheptanedioate), 2-aminoadipate (2-aminohexanedioate), oxaloacetate, and citrate. Plays a central role in catabolism of lysine, hydroxylysine, and tryptophan, by transporting common metabolite intermediates (such as 2-oxoadipate) into the mitochondria, where it is converted into acetyl-CoA and can enter the citric acid (TCA) cycle. The polypeptide is Mitochondrial 2-oxodicarboxylate carrier (Slc25a21) (Rattus norvegicus (Rat)).